Consider the following 101-residue polypeptide: Small ribosomal subunit protein uS14 (101 aa).

It belongs to the universal ribosomal protein uS14 family. In terms of assembly, part of the 30S ribosomal subunit. Contacts proteins S3 and S10.

Its function is as follows. Binds 16S rRNA, required for the assembly of 30S particles and may also be responsible for determining the conformation of the 16S rRNA at the A site. The chain is Small ribosomal subunit protein uS14 from Methylorubrum extorquens (strain PA1) (Methylobacterium extorquens).